The primary structure comprises 284 residues: Bifunctional protein FolD 1 (284 aa).

NADP(+) contacts are provided by residues 164 to 166 (GRS), serine 189, and isoleucine 230.

This sequence belongs to the tetrahydrofolate dehydrogenase/cyclohydrolase family. As to quaternary structure, homodimer.

The enzyme catalyses (6R)-5,10-methylene-5,6,7,8-tetrahydrofolate + NADP(+) = (6R)-5,10-methenyltetrahydrofolate + NADPH. It carries out the reaction (6R)-5,10-methenyltetrahydrofolate + H2O = (6R)-10-formyltetrahydrofolate + H(+). Its pathway is one-carbon metabolism; tetrahydrofolate interconversion. In terms of biological role, catalyzes the oxidation of 5,10-methylenetetrahydrofolate to 5,10-methenyltetrahydrofolate and then the hydrolysis of 5,10-methenyltetrahydrofolate to 10-formyltetrahydrofolate. In Rubrobacter xylanophilus (strain DSM 9941 / JCM 11954 / NBRC 16129 / PRD-1), this protein is Bifunctional protein FolD 1.